Here is a 526-residue protein sequence, read N- to C-terminus: Glucose-6-phosphate isomerase (526 aa).

The Proton donor role is filled by E323. Residues H352 and K454 contribute to the active site.

It belongs to the GPI family.

The protein localises to the cytoplasm. It catalyses the reaction alpha-D-glucose 6-phosphate = beta-D-fructose 6-phosphate. The protein operates within carbohydrate biosynthesis; gluconeogenesis. It participates in carbohydrate degradation; glycolysis; D-glyceraldehyde 3-phosphate and glycerone phosphate from D-glucose: step 2/4. Catalyzes the reversible isomerization of glucose-6-phosphate to fructose-6-phosphate. This chain is Glucose-6-phosphate isomerase, found in Prochlorococcus marinus subsp. pastoris (strain CCMP1986 / NIES-2087 / MED4).